An 887-amino-acid chain; its full sequence is PAN2-PAN3 deadenylation complex subunit PAN3 (887 aa).

The segment at 43-71 (GVKLKYCRYYAKDKTCFYGEECQFLHEDP) adopts a C3H1-type zinc-finger fold. Disordered stretches follow at residues 102-147 (AVAG…IPGM), 284-307 (QTPN…SNVS), and 325-392 (SPAT…SGQV). The segment covering 122-138 (PGTGAAAGGGGSSGGLD) has biased composition (gly residues). The interval 147–498 (MDGGALTDTS…PPPNRIQKSS (352 aa)) is necessary and sufficient for interaction with PABPC1 but not needed for interaction with PAN2. A PABPC-interacting motif-2 (PAM-2) motif is present at residues 284–299 (QTPNPTASEFIPKGGS). Over residues 298–307 (GSTSRLSNVS) the composition is skewed to polar residues. 2 positions are modified to phosphoserine: S354 and S361. Positions 363 to 392 (TPNPASYMVPSSASTSVNNPVSQTPSSGQV) are enriched in polar residues. A pseudokinase domain region spans residues 463–750 (QIDQADMPAV…SVNDIMPMIG (288 aa)). ATP contacts are provided by residues R521, 570–577 (DFHAGGET), and 644–645 (TK). Residues 751–789 (ARFYTQLDAAQMRNDVIEEDLAKEVQNGRLFRLLAKLGT) adopt a coiled-coil conformation. Residues 790–887 (INERPEFQKD…ELIAAANGQL (98 aa)) form a knob domain region.

The protein belongs to the protein kinase superfamily. PAN3 family. In terms of assembly, homodimer. Forms a heterotrimer with a catalytic subunit PAN2 to form the poly(A)-nuclease (PAN) deadenylation complex. Interacts (via PAM-2 motif) with poly(A)-binding protein PABPC1 (via PABC domain), conferring substrate specificity of the enzyme complex. Interacts with the GW182 family proteins TNRC6A, TNRC6B and TNRC6. Interacts with YTHDF3. Interacts with PAN2. Interacts (via N-terminus) with PABPC1 at lower efficiency than isoform 3. As to quaternary structure, interacts with PAN2. Interacts (via N-terminus) with PABPC1 at higher efficiency than isoform 1.

It localises to the cytoplasm. The protein localises to the P-body. Its subcellular location is the nucleus. Its function is as follows. Regulatory subunit of the poly(A)-nuclease (PAN) deadenylation complex, one of two cytoplasmic mRNA deadenylases involved in general and miRNA-mediated mRNA turnover. PAN specifically shortens poly(A) tails of RNA and the activity is stimulated by poly(A)-binding protein (PABP). PAN deadenylation is followed by rapid degradation of the shortened mRNA tails by the CCR4-NOT complex. Deadenylated mRNAs are then degraded by two alternative mechanisms, namely exosome-mediated 3'-5' exonucleolytic degradation, or deadenylation-dependent mRNA decapping and subsequent 5'-3' exonucleolytic degradation by XRN1. PAN3 acts as a regulator for PAN activity, recruiting the catalytic subunit PAN2 to mRNA via its interaction with RNA and PABP, and to miRNA targets via its interaction with GW182 family proteins. Decreases PAN2-mediated deadenylation, possibly by preventing progression into the second CCR4-NOT mediated stage of biphasic deadenylation. Has a significant effect on mRNA stability, generally stabilizing a subset of the transcriptome. Stabilizes mRNAs degraded by the AU-rich element (ARE)-mediated mRNA decay pathway but promotes degradation of mRNAs by the microRNA-mediated pathway. Its activity influences mRNP remodeling, specifically reducing formation of a subset of P-bodies containing GW220, an isoform of TNRC6A. In terms of biological role, enhances PAN2 deadenylase activity and has an extensive effect on mRNA stability, generally enhancing mRNA decay across the transcriptome by multiple pathways, including the AU-rich element (ARE)-mediated pathway, microRNA-mediated pathway and the nonsense-mediated pathway (NMD). Its activity is required for efficient P-body formation. May be involved in regulating mRNAs of genes involved in cell cycle progression and cell proliferation. The protein is PAN2-PAN3 deadenylation complex subunit PAN3 of Homo sapiens (Human).